The primary structure comprises 361 residues: Phosphoserine aminotransferase (361 aa).

Arg42 contributes to the L-glutamate binding site. Pyridoxal 5'-phosphate contacts are provided by residues Ala76–Thr77, Trp102, Thr152, Asp172, and Gln195. Lys196 carries the N6-(pyridoxal phosphate)lysine modification. A pyridoxal 5'-phosphate-binding site is contributed by Asn237–Thr238.

The protein belongs to the class-V pyridoxal-phosphate-dependent aminotransferase family. SerC subfamily. As to quaternary structure, homodimer. Pyridoxal 5'-phosphate is required as a cofactor.

It localises to the cytoplasm. It carries out the reaction O-phospho-L-serine + 2-oxoglutarate = 3-phosphooxypyruvate + L-glutamate. It catalyses the reaction 4-(phosphooxy)-L-threonine + 2-oxoglutarate = (R)-3-hydroxy-2-oxo-4-phosphooxybutanoate + L-glutamate. It functions in the pathway amino-acid biosynthesis; L-serine biosynthesis; L-serine from 3-phospho-D-glycerate: step 2/3. The protein operates within cofactor biosynthesis; pyridoxine 5'-phosphate biosynthesis; pyridoxine 5'-phosphate from D-erythrose 4-phosphate: step 3/5. In terms of biological role, catalyzes the reversible conversion of 3-phosphohydroxypyruvate to phosphoserine and of 3-hydroxy-2-oxo-4-phosphonooxybutanoate to phosphohydroxythreonine. The chain is Phosphoserine aminotransferase from Stenotrophomonas maltophilia (strain K279a).